The sequence spans 135 residues: Small ribosomal subunit protein uS12 (135 aa).

A 3-methylthioaspartic acid modification is found at aspartate 89. The tract at residues 101-135 (SLDTSGVADRKQSRSKYGAKQPKAGAAAPVKGKRR) is disordered. Over residues 116-135 (KYGAKQPKAGAAAPVKGKRR) the composition is skewed to low complexity.

The protein belongs to the universal ribosomal protein uS12 family. Part of the 30S ribosomal subunit. Contacts proteins S8 and S17. May interact with IF1 in the 30S initiation complex.

In terms of biological role, with S4 and S5 plays an important role in translational accuracy. Functionally, interacts with and stabilizes bases of the 16S rRNA that are involved in tRNA selection in the A site and with the mRNA backbone. Located at the interface of the 30S and 50S subunits, it traverses the body of the 30S subunit contacting proteins on the other side and probably holding the rRNA structure together. The combined cluster of proteins S8, S12 and S17 appears to hold together the shoulder and platform of the 30S subunit. The chain is Small ribosomal subunit protein uS12 from Chlorobium phaeobacteroides (strain DSM 266 / SMG 266 / 2430).